Reading from the N-terminus, the 508-residue chain is Photosystem II CP47 reaction center protein (508 aa).

The next 6 membrane-spanning stretches (helical) occupy residues 21 to 36 (AVHI…WAGS), 101 to 115 (ILFS…IWHW), 140 to 156 (GIHL…FGAF), 203 to 218 (IAAG…FHLS), 237 to 252 (VLSS…AFVV), and 457 to 472 (SFAL…HGAR).

Belongs to the PsbB/PsbC family. PsbB subfamily. In terms of assembly, PSII is composed of 1 copy each of membrane proteins PsbA, PsbB, PsbC, PsbD, PsbE, PsbF, PsbH, PsbI, PsbJ, PsbK, PsbL, PsbM, PsbT, PsbX, PsbY, PsbZ, Psb30/Ycf12, at least 3 peripheral proteins of the oxygen-evolving complex and a large number of cofactors. It forms dimeric complexes. The cofactor is Binds multiple chlorophylls. PSII binds additional chlorophylls, carotenoids and specific lipids..

The protein localises to the plastid. Its subcellular location is the chloroplast thylakoid membrane. In terms of biological role, one of the components of the core complex of photosystem II (PSII). It binds chlorophyll and helps catalyze the primary light-induced photochemical processes of PSII. PSII is a light-driven water:plastoquinone oxidoreductase, using light energy to abstract electrons from H(2)O, generating O(2) and a proton gradient subsequently used for ATP formation. This chain is Photosystem II CP47 reaction center protein, found in Oenothera argillicola (Appalachian evening primrose).